A 793-amino-acid polypeptide reads, in one-letter code: Kinesin-associated protein 3 (793 aa).

Ser60 carries the post-translational modification Phosphoserine. Basic and acidic residues predominate over residues 103-119; sequence LPGKEKKEKSSKPKDPP. The segment at 103-123 is disordered; sequence LPGKEKKEKSSKPKDPPPFEG. 5 ARM repeats span residues 333–373, 374–412, 494–533, 578–620, and 621–662; these read FMEN…NLSF, DTGLRNKMVQVGLLPKLTALLGNENYKQIAMCVLYHISM, DGPTKNLFIDYVGDLAAQISSDEEEEFVIECLGTLANLTI, DDSC…QMVF, and HQAT…IIAE.

In terms of assembly, interacts with SMC3 subunit of the cohesin complex. Heterotrimer of KIFAP3, KIF3A and KIF3B. Interacts with RAP1GDS1/SMG GDS. In terms of processing, phosphorylated on tyrosine residues by SRC in vitro; this reduces the binding affinity of the protein for RAP1GDS1.

Functionally, involved in tethering the chromosomes to the spindle pole and in chromosome movement. Binds to the tail domain of the KIF3A/KIF3B heterodimer to form a heterotrimeric KIF3 complex and may regulate the membrane binding of this complex. The polypeptide is Kinesin-associated protein 3 (Kifap3) (Mus musculus (Mouse)).